A 198-amino-acid polypeptide reads, in one-letter code: MIIVIITVMVSFLCGSIPTGYLITKKLSGIDVRTKGSGNIGSTNVKRVAGTKISMITQVMDILKGIIPVLLCMLIASKIKLPISTSMYLSIIVIAVILGHDYTPFLGFNGGKGVNTTVGAFFLLAPAAVLAGAVVYFVLRLFTKIVSIKSIAVGITMPIACIALRLPIEITVCAIIACGLLILRHKDNLIRLVNNEEK.

5 consecutive transmembrane segments (helical) span residues 2-22 (IIVI…TGYL), 55-75 (MITQ…CMLI), 88-108 (YLSI…FLGF), 118-138 (VGAF…VYFV), and 162-182 (IALR…GLLI).

Belongs to the PlsY family. In terms of assembly, probably interacts with PlsX.

It localises to the cell membrane. The catalysed reaction is an acyl phosphate + sn-glycerol 3-phosphate = a 1-acyl-sn-glycero-3-phosphate + phosphate. Its pathway is lipid metabolism; phospholipid metabolism. Catalyzes the transfer of an acyl group from acyl-phosphate (acyl-PO(4)) to glycerol-3-phosphate (G3P) to form lysophosphatidic acid (LPA). This enzyme utilizes acyl-phosphate as fatty acyl donor, but not acyl-CoA or acyl-ACP. The polypeptide is Glycerol-3-phosphate acyltransferase (Clostridium acetobutylicum (strain ATCC 824 / DSM 792 / JCM 1419 / IAM 19013 / LMG 5710 / NBRC 13948 / NRRL B-527 / VKM B-1787 / 2291 / W)).